A 343-amino-acid polypeptide reads, in one-letter code: Uroporphyrinogen decarboxylase (343 aa).

Substrate-binding positions include 26–30 (RQAGR), Asp-75, Tyr-150, Ser-205, and His-319.

Belongs to the uroporphyrinogen decarboxylase family. As to quaternary structure, homodimer.

It localises to the cytoplasm. It carries out the reaction uroporphyrinogen III + 4 H(+) = coproporphyrinogen III + 4 CO2. It functions in the pathway porphyrin-containing compound metabolism; protoporphyrin-IX biosynthesis; coproporphyrinogen-III from 5-aminolevulinate: step 4/4. In terms of biological role, catalyzes the decarboxylation of four acetate groups of uroporphyrinogen-III to yield coproporphyrinogen-III. The polypeptide is Uroporphyrinogen decarboxylase (Syntrophotalea carbinolica (strain DSM 2380 / NBRC 103641 / GraBd1) (Pelobacter carbinolicus)).